Reading from the N-terminus, the 480-residue chain is Dimethyl-sulfide monooxygenase (480 aa).

FMN-binding residues include aspartate 58, threonine 104, histidine 154, tyrosine 158, and serine 230. The segment at 423-480 is disordered; it reads QDSYKPGSLRRKLIGTNDGRVESTHPAAQYRDAYVGKESVADRTQPSPFANAKAPVAE.

This sequence belongs to the NtaA/SnaA/DszA monooxygenase family. As to quaternary structure, heterodimer of 2 subunits, DmoA and DmoB. Requires FMN as cofactor.

It catalyses the reaction dimethyl sulfide + NADH + O2 + H(+) = methanethiol + formaldehyde + NAD(+) + H2O. Its activity is regulated as follows. Inhibited by umbelliferone, 8-anilinonaphthalenesulfonate, a range of metal-chelating agents, and Hg(2+), Cd(2+) and Pb(2+) ions. Monooxygenase that mediates oxidation of dimethyl sulfide, the first step in dimethyl sulfide degradation pathway. Has much lower activity with diethyl sulfide and other short-chain alkyl methyl sulfides. The polypeptide is Dimethyl-sulfide monooxygenase (dmoA) (Hyphomicrobium sulfonivorans).